We begin with the raw amino-acid sequence, 331 residues long: Ketol-acid reductoisomerase (NADP(+)) (331 aa).

Residues 2 to 182 (AKLFYDSDAD…GGTRAGILET (181 aa)) form the KARI N-terminal Rossmann domain. Residues 25–28 (YGSQ), S51, S53, and 83–86 (DEFQ) each bind NADP(+). H108 is a catalytic residue. Residue G134 coordinates NADP(+). Residues 183–328 (NFKEETETDL…KTLRSMFSWL (146 aa)) enclose the KARI C-terminal knotted domain. Mg(2+) is bound by residues D191, E195, E227, and E231. Position 252 (S252) interacts with substrate.

It belongs to the ketol-acid reductoisomerase family. It depends on Mg(2+) as a cofactor.

The enzyme catalyses (2R)-2,3-dihydroxy-3-methylbutanoate + NADP(+) = (2S)-2-acetolactate + NADPH + H(+). It carries out the reaction (2R,3R)-2,3-dihydroxy-3-methylpentanoate + NADP(+) = (S)-2-ethyl-2-hydroxy-3-oxobutanoate + NADPH + H(+). It participates in amino-acid biosynthesis; L-isoleucine biosynthesis; L-isoleucine from 2-oxobutanoate: step 2/4. It functions in the pathway amino-acid biosynthesis; L-valine biosynthesis; L-valine from pyruvate: step 2/4. Involved in the biosynthesis of branched-chain amino acids (BCAA). Catalyzes an alkyl-migration followed by a ketol-acid reduction of (S)-2-acetolactate (S2AL) to yield (R)-2,3-dihydroxy-isovalerate. In the isomerase reaction, S2AL is rearranged via a Mg-dependent methyl migration to produce 3-hydroxy-3-methyl-2-ketobutyrate (HMKB). In the reductase reaction, this 2-ketoacid undergoes a metal-dependent reduction by NADPH to yield (R)-2,3-dihydroxy-isovalerate. The chain is Ketol-acid reductoisomerase (NADP(+)) from Prochlorococcus marinus (strain NATL2A).